Reading from the N-terminus, the 323-residue chain is Elongation factor P--(R)-beta-lysine ligase (323 aa).

74 to 76 (SPE) provides a ligand contact to substrate. ATP is bound by residues 98–100 (RNE) and N107. A substrate-binding site is contributed by Y116. 242–243 (EL) is an ATP binding site. A substrate-binding site is contributed by E249. G298 serves as a coordination point for ATP.

The protein belongs to the class-II aminoacyl-tRNA synthetase family. EpmA subfamily. In terms of assembly, homodimer.

The enzyme catalyses D-beta-lysine + L-lysyl-[protein] + ATP = N(6)-((3R)-3,6-diaminohexanoyl)-L-lysyl-[protein] + AMP + diphosphate + H(+). In terms of biological role, with EpmB is involved in the beta-lysylation step of the post-translational modification of translation elongation factor P (EF-P). Catalyzes the ATP-dependent activation of (R)-beta-lysine produced by EpmB, forming a lysyl-adenylate, from which the beta-lysyl moiety is then transferred to the epsilon-amino group of a conserved specific lysine residue in EF-P. This Vibrio vulnificus (strain YJ016) protein is Elongation factor P--(R)-beta-lysine ligase.